The primary structure comprises 533 residues: GDP-fucose protein O-fucosyltransferase 4 (533 aa).

At 1-20 the chain is on the cytoplasmic side; the sequence is MSAGCTQLVWGGRLHWGASH. A helical; Signal-anchor for type II membrane protein membrane pass occupies residues 21 to 37; that stretch reads LLSCLLALCALWVLAAA. Over 38–533 the chain is Lumenal; that stretch reads EPTEGGSANV…ETYIKRSMNH (496 aa). N148, N206, and N358 each carry an N-linked (GlcNAc...) asparagine glycan. Residues C429 and C432 are joined by a disulfide bond. N-linked (GlcNAc...) asparagine glycosylation occurs at N511.

The protein belongs to the glycosyltransferase 10 family.

It is found in the endoplasmic reticulum membrane. It catalyses the reaction L-threonyl-[protein] + GDP-beta-L-fucose = 3-O-(alpha-L-fucosyl)-L-threonyl-[protein] + GDP + H(+). It carries out the reaction L-seryl-[protein] + GDP-beta-L-fucose = 3-O-(alpha-L-fucosyl)-L-seryl-[protein] + GDP + H(+). It functions in the pathway protein modification; protein glycosylation. Its function is as follows. Protein O-fucosyltransferase that specifically catalyzes O-fucosylation of serine or threonine residues in EMI domains of target proteins. Attaches fucose through an O-glycosidic linkage. O-fucosylation of EMI domain-containing proteins may be required for facilitating protein folding and secretion. This chain is GDP-fucose protein O-fucosyltransferase 4 (fut11), found in Xenopus tropicalis (Western clawed frog).